The chain runs to 410 residues: Peptidase T (410 aa).

His-79 serves as a coordination point for Zn(2+). Asp-81 is an active-site residue. Asp-142 contributes to the Zn(2+) binding site. Residue Glu-176 is the Proton acceptor of the active site. Zn(2+)-binding residues include Glu-177, Asp-199, and His-381.

It belongs to the peptidase M20B family. Requires Zn(2+) as cofactor.

The protein resides in the cytoplasm. It carries out the reaction Release of the N-terminal residue from a tripeptide.. Cleaves the N-terminal amino acid of tripeptides. In Listeria innocua serovar 6a (strain ATCC BAA-680 / CLIP 11262), this protein is Peptidase T.